The following is a 355-amino-acid chain: Green-sensitive opsin-1 (355 aa).

The Extracellular portion of the chain corresponds to 1–49 (MAAHADEPVFAARRYNEETTRESAFVYTNANNTRDPFEGPNYHIAPRWV). Residue N31 is glycosylated (N-linked (GlcNAc...) asparagine). The helical transmembrane segment at 50 to 74 (YNLASLWMIIVVIASIFTNSLVIVA) threads the bilayer. The Cytoplasmic portion of the chain corresponds to 75-86 (TAKFKKLRHPLN). The chain crosses the membrane as a helical span at residues 87–112 (WILVNLAIADLGETVLASTISVFNQV). Residues 113-126 (FGYFVLGHPMCIFE) are Extracellular-facing. A disulfide bridge connects residues C123 and C200. Residues 127 to 146 (GWTVSVCGITALWSLTIISW) traverse the membrane as a helical segment. At 147-165 (ERWVVVCKPFGNVKFDGKW) the chain is on the cytoplasmic side. A helical transmembrane segment spans residues 166–189 (AAGGIIFAWTWAIIWCTPPIFGWS). Residues 190–215 (RYWPHGLKTSCGPDVFSGSEDPGVAS) are Extracellular-facing. A helical transmembrane segment spans residues 216-243 (YMVTLLLTCCILPLSVIIICYIFVWNAI). Topologically, residues 244 to 265 (HQVAQQQKDSESTQKAEKEVSR) are cytoplasmic. A helical transmembrane segment spans residues 266–289 (MVVVMILAFILCWGPYASFATFSA). Residues 290-297 (LNPGYAWH) are Extracellular-facing. Residues 298–322 (PLAAALPAYFAKSATIYNPIIYVFM) form a helical membrane-spanning segment. The residue at position 309 (K309) is an N6-(retinylidene)lysine. Residues 323–355 (NRQFRSCIMQLFGKKVEDASEVSGSTTEVSTAS) are Cytoplasmic-facing.

It belongs to the G-protein coupled receptor 1 family. Opsin subfamily. As to expression, the color pigments are found in the cone photoreceptor cells.

Its subcellular location is the membrane. Visual pigments are the light-absorbing molecules that mediate vision. They consist of an apoprotein, opsin, covalently linked to cis-retinal. The chain is Green-sensitive opsin-1 (G103) from Psalidodon fasciatus (Banded astyanax).